Consider the following 147-residue polypeptide: uncharacterized protein (147 aa).

One can recognise an HTH marR-type domain in the interval 11–147 (NTSPGFLLWQ…SGLQELLKHE (137 aa)). A DNA-binding region (H-T-H motif) is located at residues 61–84 (QKKLASFSQTNIMMVSEVVRTLEK).

This is an uncharacterized protein from Bacillus subtilis (strain 168).